Here is a 229-residue protein sequence, read N- to C-terminus: Uracil-DNA glycosylase (229 aa).

The active-site Proton acceptor is the aspartate 65.

Belongs to the uracil-DNA glycosylase (UDG) superfamily. UNG family.

The protein resides in the cytoplasm. It carries out the reaction Hydrolyzes single-stranded DNA or mismatched double-stranded DNA and polynucleotides, releasing free uracil.. In terms of biological role, excises uracil residues from the DNA which can arise as a result of misincorporation of dUMP residues by DNA polymerase or due to deamination of cytosine. The sequence is that of Uracil-DNA glycosylase from Limosilactobacillus fermentum (strain NBRC 3956 / LMG 18251) (Lactobacillus fermentum).